The primary structure comprises 295 residues: Acetyl-coenzyme A carboxylase carboxyl transferase subunit beta (295 aa).

The tract at residues 1–20 is disordered; it reads MSWLSKLMPSGIRTENTPAK. A CoA carboxyltransferase N-terminal domain is found at 28–295; sequence LWEKCSNCGS…QPHPQDADAA (268 aa). Cysteine 32, cysteine 35, cysteine 51, and cysteine 54 together coordinate Zn(2+). Residues 32–54 form a C4-type zinc finger; it reads CSNCGSALYGPELEENLEVCPKC.

It belongs to the AccD/PCCB family. In terms of assembly, acetyl-CoA carboxylase is a heterohexamer composed of biotin carboxyl carrier protein (AccB), biotin carboxylase (AccC) and two subunits each of ACCase subunit alpha (AccA) and ACCase subunit beta (AccD). Requires Zn(2+) as cofactor.

The protein resides in the cytoplasm. It carries out the reaction N(6)-carboxybiotinyl-L-lysyl-[protein] + acetyl-CoA = N(6)-biotinyl-L-lysyl-[protein] + malonyl-CoA. Its pathway is lipid metabolism; malonyl-CoA biosynthesis; malonyl-CoA from acetyl-CoA: step 1/1. In terms of biological role, component of the acetyl coenzyme A carboxylase (ACC) complex. Biotin carboxylase (BC) catalyzes the carboxylation of biotin on its carrier protein (BCCP) and then the CO(2) group is transferred by the transcarboxylase to acetyl-CoA to form malonyl-CoA. The sequence is that of Acetyl-coenzyme A carboxylase carboxyl transferase subunit beta from Xanthomonas campestris pv. campestris (strain 8004).